We begin with the raw amino-acid sequence, 746 residues long: Disintegrin and metalloproteinase domain-containing protein 18 (746 aa).

Positions 1–16 are cleaved as a signal peptide; it reads MFFLLALLTELGRLQA. A propeptide spanning residues 17–183 is cleaved from the precursor; that stretch reads HVGSEGIFLH…QKKNLSKLLP (167 aa). Asn-36, Asn-122, Asn-149, Asn-156, Asn-177, and Asn-294 each carry an N-linked (GlcNAc...) asparagine glycan. At 177–687 the chain is on the extracellular side; the sequence is NLSKLLPQYL…EKGYNAHWNN (511 aa). The 198-residue stretch at 184–381 folds into the Peptidase M12B domain; sequence QYLEIYIIVE…FEAKCLQKLS (198 aa). Intrachain disulfides connect Cys-293–Cys-376, Cys-335–Cys-360, Cys-337–Cys-342, and Cys-450–Cys-471. Residues Asn-359, Asn-465, Asn-611, and Asn-625 are each glycosylated (N-linked (GlcNAc...) asparagine). The Disintegrin domain occupies 390–479; that stretch reads QPVCGNGILE…DCVPDTYALN (90 aa). In terms of domain architecture, EGF-like spans 620–654; the sequence is TGYNCNTTTKCKGKGICNNFGNCQCFPGHKPPDCK. Intrachain disulfides connect Cys-624/Cys-636, Cys-630/Cys-642, and Cys-644/Cys-653. A helical membrane pass occupies residues 688–708; that stretch reads WFILSFYIVLPFFIIFTIVIF. Residues 709 to 746 are Cytoplasmic-facing; sequence KRNEIRKLCNRENTELIHPLYQKAMMWNINIAQNFRSK.

In terms of processing, the prodomain and the metalloprotease-like domain are cleaved during the epididymal maturation of the spermatozoa. In terms of tissue distribution, expressed predominantly in adult and prepubertal testis.

It is found in the membrane. Its function is as follows. Sperm surface membrane protein that may be involved in spermatogenesis and fertilization. This is a non catalytic metalloprotease-like protein. In Macaca fascicularis (Crab-eating macaque), this protein is Disintegrin and metalloproteinase domain-containing protein 18 (ADAM18).